The sequence spans 364 residues: Thymidine kinase (364 aa).

Residue 36–43 coordinates ATP; sequence GPFGVGKT. Catalysis depends on glutamate 64, which acts as the Proton acceptor. Glutamine 108 serves as a coordination point for substrate. Arginine 201 provides a ligand contact to ATP. Arginine 207 lines the substrate pocket.

It belongs to the herpesviridae thymidine kinase family. Homodimer.

The enzyme catalyses thymidine + ATP = dTMP + ADP + H(+). Catalyzes the transfer of the gamma-phospho group of ATP to thymidine to generate dTMP in the salvage pathway of pyrimidine synthesis. The dTMP serves as a substrate for DNA polymerase during viral DNA replication. Allows the virus to be reactivated and to grow in non-proliferative cells lacking a high concentration of phosphorylated nucleic acid precursors. This chain is Thymidine kinase, found in Infectious laryngotracheitis virus (strain Thorne V882) (ILTV).